Here is a 215-residue protein sequence, read N- to C-terminus: Thymidylate kinase (215 aa).

12–19 is an ATP binding site; the sequence is GLEGAGKT.

Belongs to the thymidylate kinase family.

It carries out the reaction dTMP + ATP = dTDP + ADP. Functionally, phosphorylation of dTMP to form dTDP in both de novo and salvage pathways of dTTP synthesis. This is Thymidylate kinase from Halorhodospira halophila (strain DSM 244 / SL1) (Ectothiorhodospira halophila (strain DSM 244 / SL1)).